The chain runs to 142 residues: Transcriptional regulator MraZ (142 aa).

SpoVT-AbrB domains follow at residues 5-51 (ASAL…PRPE) and 77-120 (AMDV…DSQT).

The protein belongs to the MraZ family. In terms of assembly, forms oligomers.

It is found in the cytoplasm. The protein localises to the nucleoid. This is Transcriptional regulator MraZ from Burkholderia cenocepacia (strain HI2424).